The sequence spans 694 residues: DNA ligase (694 aa).

NAD(+)-binding positions include aspartate 41 to aspartate 45, serine 91 to leucine 92, and glutamate 121. The active-site N6-AMP-lysine intermediate is lysine 123. 4 residues coordinate NAD(+): arginine 144, glutamate 184, lysine 300, and lysine 324. Zn(2+) is bound by residues cysteine 418, cysteine 421, cysteine 437, and cysteine 443. In terms of domain architecture, BRCT spans serine 607 to aspartate 694.

This sequence belongs to the NAD-dependent DNA ligase family. LigA subfamily. Requires Mg(2+) as cofactor. Mn(2+) serves as cofactor.

The catalysed reaction is NAD(+) + (deoxyribonucleotide)n-3'-hydroxyl + 5'-phospho-(deoxyribonucleotide)m = (deoxyribonucleotide)n+m + AMP + beta-nicotinamide D-nucleotide.. In terms of biological role, DNA ligase that catalyzes the formation of phosphodiester linkages between 5'-phosphoryl and 3'-hydroxyl groups in double-stranded DNA using NAD as a coenzyme and as the energy source for the reaction. It is essential for DNA replication and repair of damaged DNA. This is DNA ligase from Mycobacterium leprae (strain TN).